A 446-amino-acid polypeptide reads, in one-letter code: NADH-ubiquinone oxidoreductase chain 4 (446 aa).

Transmembrane regions (helical) follow at residues 4-24 (IILF…YWMV), 56-76 (MLSY…LLAS), 93-113 (IVIL…FMFY), 114-134 (LFFE…GYQP), 141-161 (VYLL…IFYV), 182-202 (LLYF…LVHL), 212-232 (PVSG…YGLL), 245-265 (YSFV…LVCL), 272-292 (ALIA…LLTM), 297-317 (LCGS…LFCL), 330-350 (MLIN…WFLL), 373-393 (IVSW…FSAA), and 426-446 (LLHW…ILWL).

This sequence belongs to the complex I subunit 4 family.

The protein resides in the mitochondrion membrane. It catalyses the reaction a ubiquinone + NADH + 5 H(+)(in) = a ubiquinol + NAD(+) + 4 H(+)(out). Core subunit of the mitochondrial membrane respiratory chain NADH dehydrogenase (Complex I) that is believed to belong to the minimal assembly required for catalysis. Complex I functions in the transfer of electrons from NADH to the respiratory chain. The immediate electron acceptor for the enzyme is believed to be ubiquinone. This is NADH-ubiquinone oxidoreductase chain 4 (mt:ND4) from Drosophila yakuba (Fruit fly).